Consider the following 332-residue polypeptide: 2-hydroxyacid dehydrogenase homolog 1 (332 aa).

NAD(+) contacts are provided by residues 154–155 (RI), 233–235 (TSR), and Asp-259. Residue Arg-235 is part of the active site. The active site involves Glu-264. His-296 acts as the Proton donor in catalysis. Position 296 to 299 (296 to 299 (HQAF)) interacts with NAD(+).

It belongs to the D-isomer specific 2-hydroxyacid dehydrogenase family.

It is found in the cytoplasm. The protein resides in the nucleus. This Schizosaccharomyces pombe (strain 972 / ATCC 24843) (Fission yeast) protein is 2-hydroxyacid dehydrogenase homolog 1.